A 445-amino-acid chain; its full sequence is Tubulin beta-4B chain (445 aa).

An MREI motif motif is present at residues 1–4; it reads MREI. Glutamine 11 contributes to the GTP binding site. Threonine 55 is subject to Phosphothreonine. Lysine 58 carries the post-translational modification N6-acetyllysine. Residues glutamate 69, serine 138, glycine 142, threonine 143, and glycine 144 each contribute to the GTP site. Glutamate 69 is a binding site for Mg(2+). A Phosphoserine; by CDK1 modification is found at serine 172. Residues asparagine 204 and asparagine 226 each contribute to the GTP site. A disordered region spans residues 426-445; it reads QDATAEEEGEFEEEAEEEVA. A compositionally biased stretch (acidic residues) spans 429-445; that stretch reads TAEEEGEFEEEAEEEVA. Glutamate 438 bears the 5-glutamyl polyglutamate mark.

This sequence belongs to the tubulin family. As to quaternary structure, dimer of alpha and beta chains. A typical microtubule is a hollow water-filled tube with an outer diameter of 25 nm and an inner diameter of 15 nM. Alpha-beta heterodimers associate head-to-tail to form protofilaments running lengthwise along the microtubule wall with the beta-tubulin subunit facing the microtubule plus end conferring a structural polarity. Microtubules usually have 13 protofilaments but different protofilament numbers can be found in some organisms and specialized cells. Component of sperm flagellar doublet microtubules. Mg(2+) is required as a cofactor. Post-translationally, some glutamate residues at the C-terminus are polyglycylated, resulting in polyglycine chains on the gamma-carboxyl group. Glycylation is mainly limited to tubulin incorporated into axonemes (cilia and flagella) whereas glutamylation is prevalent in neuronal cells, centrioles, axonemes, and the mitotic spindle. Both modifications can coexist on the same protein on adjacent residues, and lowering polyglycylation levels increases polyglutamylation, and reciprocally. Cilia and flagella glycylation is required for their stability and maintenance. Flagella glycylation controls sperm motility. In terms of processing, some glutamate residues at the C-terminus are polyglutamylated, resulting in polyglutamate chains on the gamma-carboxyl group. Polyglutamylation plays a key role in microtubule severing by spastin (SPAST). SPAST preferentially recognizes and acts on microtubules decorated with short polyglutamate tails: severing activity by SPAST increases as the number of glutamates per tubulin rises from one to eight, but decreases beyond this glutamylation threshold. Glutamylation is also involved in cilia motility. Phosphorylated on Ser-172 by CDK1 during the cell cycle, from metaphase to telophase, but not in interphase. This phosphorylation inhibits tubulin incorporation into microtubules.

It localises to the cytoplasm. The protein resides in the cytoskeleton. The protein localises to the flagellum axoneme. Its function is as follows. Tubulin is the major constituent of microtubules, a cylinder consisting of laterally associated linear protofilaments composed of alpha- and beta-tubulin heterodimers. Microtubules grow by the addition of GTP-tubulin dimers to the microtubule end, where a stabilizing cap forms. Below the cap, tubulin dimers are in GDP-bound state, owing to GTPase activity of alpha-tubulin. The chain is Tubulin beta-4B chain (TUBB4B) from Bos taurus (Bovine).